The chain runs to 361 residues: Protein SGT1 homolog (361 aa).

TPR repeat units lie at residues 3-36 (ASDL…GPAT), 37-70 (ADLY…DPTM), and 71-104 (HKAY…APGD). A Phosphothreonine modification is found at Thr-150. The CS domain maps to 159-248 (KPKYRHDYYN…AEQVTWTTLD (90 aa)). The disordered stretch occupies residues 255-295 (AIPQKISTPAETAPRPSYPSSKSKKDWDKLEAEVKKEEKEE). Thr-262 carries the post-translational modification Phosphothreonine. The 91-residue stretch at 271-361 (SYPSSKSKKD…DGMELKKWEI (91 aa)) folds into the SGS domain. Basic and acidic residues predominate over residues 277–295 (SKKDWDKLEAEVKKEEKEE).

It belongs to the SGT1 family. Constitutively phosphorylated at Thr-262 and phosphorylated at Thr-150 upon infection with the fungal pathogen Ustilago maydis.

The protein resides in the cytoplasm. The protein localises to the nucleus. May act as positive regulator of basal defense. May be involved in basal disease resistance to the fungal pathogen Ustilago maydis. The polypeptide is Protein SGT1 homolog (Zea mays (Maize)).